A 124-amino-acid polypeptide reads, in one-letter code: S-adenosylmethionine decarboxylase proenzyme (124 aa).

S63 functions as the Schiff-base intermediate with substrate; via pyruvic acid in the catalytic mechanism. S63 is subject to Pyruvic acid (Ser); by autocatalysis. H68 serves as the catalytic Proton acceptor; for processing activity. C83 (proton donor; for catalytic activity) is an active-site residue.

This sequence belongs to the prokaryotic AdoMetDC family. Type 1 subfamily. As to quaternary structure, heterotetramer of two alpha and two beta chains arranged as a dimer of alpha/beta heterodimers. The cofactor is pyruvate. In terms of processing, is synthesized initially as an inactive proenzyme. Formation of the active enzyme involves a self-maturation process in which the active site pyruvoyl group is generated from an internal serine residue via an autocatalytic post-translational modification. Two non-identical subunits are generated from the proenzyme in this reaction, and the pyruvate is formed at the N-terminus of the alpha chain, which is derived from the carboxyl end of the proenzyme. The post-translation cleavage follows an unusual pathway, termed non-hydrolytic serinolysis, in which the side chain hydroxyl group of the serine supplies its oxygen atom to form the C-terminus of the beta chain, while the remainder of the serine residue undergoes an oxidative deamination to produce ammonia and the pyruvoyl group blocking the N-terminus of the alpha chain.

The enzyme catalyses S-adenosyl-L-methionine + H(+) = S-adenosyl 3-(methylsulfanyl)propylamine + CO2. It functions in the pathway amine and polyamine biosynthesis; S-adenosylmethioninamine biosynthesis; S-adenosylmethioninamine from S-adenosyl-L-methionine: step 1/1. Its function is as follows. Catalyzes the decarboxylation of S-adenosylmethionine to S-adenosylmethioninamine (dcAdoMet), the propylamine donor required for the synthesis of the polyamines spermine and spermidine from the diamine putrescine. In Acetivibrio thermocellus (strain ATCC 27405 / DSM 1237 / JCM 9322 / NBRC 103400 / NCIMB 10682 / NRRL B-4536 / VPI 7372) (Clostridium thermocellum), this protein is S-adenosylmethionine decarboxylase proenzyme.